We begin with the raw amino-acid sequence, 253 residues long: Proteasome subunit alpha type-3 (253 aa).

The interval 230 to 253 (ELTEKARKAGDAANKDEDSDNETH) is disordered. Basic and acidic residues predominate over residues 231–253 (LTEKARKAGDAANKDEDSDNETH). Ser248 is modified (phosphoserine).

This sequence belongs to the peptidase T1A family. The 26S proteasome consists of a 20S proteasome core and two 19S regulatory subunits. The 20S proteasome core is composed of 28 subunits that are arranged in four stacked rings, resulting in a barrel-shaped structure. The two end rings are each formed by seven alpha subunits, and the two central rings are each formed by seven beta subunits. The catalytic chamber with the active sites is on the inside of the barrel. Interacts with ntc.

Its subcellular location is the cytoplasm. The protein resides in the nucleus. The proteasome is a multicatalytic proteinase complex which is characterized by its ability to cleave peptides with Arg, Phe, Tyr, Leu, and Glu adjacent to the leaving group at neutral or slightly basic pH. The proteasome has an ATP-dependent proteolytic activity. This chain is Proteasome subunit alpha type-3 (Prosalpha7), found in Drosophila melanogaster (Fruit fly).